Here is a 291-residue protein sequence, read N- to C-terminus: Fructose-1,6-bisphosphatase class 1 1 (291 aa).

Mg(2+)-binding residues include Glu-78, Asp-95, Leu-97, and Asp-98. Substrate is bound by residues 98–101 (DGSS), Tyr-203, and Lys-233. Glu-239 is a Mg(2+) binding site.

The protein belongs to the FBPase class 1 family. As to quaternary structure, homotetramer. The cofactor is Mg(2+).

The protein localises to the cytoplasm. It catalyses the reaction beta-D-fructose 1,6-bisphosphate + H2O = beta-D-fructose 6-phosphate + phosphate. The protein operates within carbohydrate biosynthesis; gluconeogenesis. In Haloarcula marismortui (strain ATCC 43049 / DSM 3752 / JCM 8966 / VKM B-1809) (Halobacterium marismortui), this protein is Fructose-1,6-bisphosphatase class 1 1.